A 1306-amino-acid polypeptide reads, in one-letter code: Clustered mitochondria protein homolog (1306 aa).

The segment covering 1 to 11 (MAVNNEVNNAA) has biased composition (low complexity). The tract at residues 1–47 (MAVNNEVNNAASETPTDVSSSSQKLATEETALTNGADHEEEDGGEAG) is disordered. Residues 12-33 (SETPTDVSSSSQKLATEETALT) are compositionally biased toward polar residues. The region spanning 336-580 (DITRTQENYL…RVTPLDITWM (245 aa)) is the Clu domain. 2 disordered regions span residues 630–689 (ERKR…QERI) and 912–956 (KQSQ…SPAA). The span at 656–689 (EPAKSEEPTENGELAKKSESDEAAEPSKPDQERI) shows a compositional bias: basic and acidic residues. TPR repeat units follow at residues 1032 to 1065 (ARVY…SERT), 1074 to 1107 (LLNY…WKVV), and 1116 to 1149 (ITTI…CEEV). Positions 1275–1306 (FIEGSDQSNQNKKRPGRSNPKRRGGAAATAGK) are disordered. The segment covering 1285–1298 (NKKRPGRSNPKRRG) has biased composition (basic residues).

Belongs to the CLU family. As to quaternary structure, may associate with the eukaryotic translation initiation factor 3 (eIF-3) complex.

The protein resides in the cytoplasm. Its function is as follows. mRNA-binding protein involved in proper cytoplasmic distribution of mitochondria. This Botryotinia fuckeliana (strain B05.10) (Noble rot fungus) protein is Clustered mitochondria protein homolog.